A 78-amino-acid chain; its full sequence is Probable [Fe-S]-dependent transcriptional repressor (78 aa).

4 residues coordinate iron-sulfur cluster: C56, C61, C64, and C70.

Belongs to the FeoC family.

Functionally, may function as a transcriptional regulator that controls feoABC expression. The protein is Probable [Fe-S]-dependent transcriptional repressor of Escherichia coli O17:K52:H18 (strain UMN026 / ExPEC).